The following is a 385-amino-acid chain: Protein delta homolog 1 (385 aa).

Residues Met1–Gly23 form the signal peptide. 6 EGF-like domains span residues Ala24–Asp55, Leu53–Glu86, Asp88–Gln125, Lys127–Glu168, Ala172–Ser208, and Pro210–Ala247. Topologically, residues Ala24 to Gln305 are extracellular. 12 cysteine pairs are disulfide-bonded: Cys26-Cys37, Cys30-Cys43, Cys45-Cys54, Cys57-Cys68, Cys63-Cys74, Cys76-Cys85, Cys92-Cys103, Cys97-Cys113, Cys115-Cys124, Cys131-Cys144, Cys138-Cys156, and Cys158-Cys167. The O-linked (GalNAc...) serine glycan is linked to Ser94. N-linked (GlcNAc...) asparagine glycosylation occurs at Asn100. Asn165 carries an N-linked (GlcNAc...) asparagine; atypical; partial glycan. A glycan (N-linked (GlcNAc...) asparagine; atypical) is linked at Asn174. 6 disulfides stabilise this stretch: Cys176–Cys187, Cys181–Cys196, Cys198–Cys207, Cys214–Cys225, Cys219–Cys235, and Cys237–Cys246. O-linked (GalNAc...) serine glycosylation occurs at Ser216. Thr224 carries O-linked (GalNAc...) threonine glycosylation. Residue Thr258 is glycosylated (O-linked (GalNAc...) threonine). Thr267 carries an O-linked (GalNAc...) threonine; partial glycan. Thr271 carries O-linked (GalNAc...) threonine glycosylation. N-linked (GlcNAc...) asparagine glycosylation is present at Asn295. The chain crosses the membrane as a helical span at residues Ala306 to Leu329. Over Asn330–Ile385 the chain is Cytoplasmic.

As to quaternary structure, monomer. Interacts with SH3RF2. Post-translationally, N- and O-glycosylated. As to expression, highly expressed in fetal liver, placenta, adult adrenal gland, brain, testis and ovary and, to a lesser degree, in adult kidney, muscle, thymus and heart.

Its subcellular location is the membrane. It is found in the cytoplasm. Functionally, may have a role in neuroendocrine differentiation. Inhibits adipocyte differentiation. The polypeptide is Protein delta homolog 1 (Dlk1) (Mus musculus (Mouse)).